The sequence spans 168 residues: Translationally-controlled tumor protein homolog (168 aa).

The TCTP domain maps to 1 to 168 (MLVYQDLLTG…LAPGLKEIKC (168 aa)).

The protein belongs to the TCTP family.

Its subcellular location is the cytoplasm. In terms of biological role, involved in calcium binding and microtubule stabilization. The chain is Translationally-controlled tumor protein homolog (TCTP) from Solanum tuberosum (Potato).